Consider the following 67-residue polypeptide: Conotoxin Cl6.10 (67 aa).

The N-terminal stretch at Met-1–Ala-24 is a signal peptide. Residues Thr-25–Pro-37 constitute a propeptide that is removed on maturation. 3 disulfide bridges follow: Cys-43–Cys-57, Cys-50–Cys-61, and Cys-56–Cys-65.

This sequence belongs to the conotoxin O1 superfamily. In terms of tissue distribution, expressed by the venom duct.

Its subcellular location is the secreted. The protein is Conotoxin Cl6.10 of Californiconus californicus (California cone).